A 910-amino-acid chain; its full sequence is Importin subunit beta-2 (910 aa).

19 HEAT repeats span residues 12 to 39 (VLVELSEVIKNSLSENSQTRNAALNLLE), 44 to 82 (IPDLNNYLTCILINATELSVSIRSAAGLLLKNNVRVSSL), 93 to 126 (YTKSTVIRGLCDPEQLIRGISGNVITTIISRWGI), 132 to 169 (VLPQLMEMLSSPASTTQEGAFSALTKICEDSAQELDRD), 177 to 207 (DFMIPRFIELARHENPKIRTDALFCLNQFVL), 220 to 247 (FLETCYALATDVSPNVRKNVCQALVYLL), 259 to 286 (GSIVEYMLYSTQDSDQNVALEACEFWLA), 302 to 406 (DKIV…LSSF), 414 to 442 (IILPHLKQSLTSEDWKVQEAGVLAVGAIA), 454 to 481 (PELYPYFLSLLDSKKPLVRTITCWTLGR), 499 to 532 (FVPLLQGLLRMVVDNNKKVQEAGCSAFAILEEQA), 540 to 573 (LEPILTNLAFAFQKYQRKNVLILYDAVQTLADYV), 581 to 619 (RYIELLITPLLQKWSMIPDDDPNLFPLFECLSSVAVALR), 627 to 677 (AETY…ALGS), 690 to 721 (LGQIIGICAKDEVPEVRQSAYALLGDMCMYCF), 729 to 764 (DALLVDMLPQMQLPLLHVSASNNAIWSAGEMALQLG), 772 to 807 (KPLLERLICILKSKKSNTTVLENVAITIGRLGVYNP), 815 to 848 (ELFYQPWFEIIKTVGENEEKDSAFRGFCNILACN), and 857 to 888 (PMFVLCVAEYENPSAELRDMFQKILQGSVELF). The Importin N-terminal domain maps to 34 to 122 (ALNLLEKAKD…SGNVITTIIS (89 aa)). Residues 333-381 (DREEDIRPQHAKGKSRITLNTQGPITQQGSSNADADELEDEDEDDDEFD) are disordered. Over residues 349 to 364 (ITLNTQGPITQQGSSN) the composition is skewed to polar residues. Positions 366–381 (DADELEDEDEDDDEFD) are enriched in acidic residues.

It belongs to the importin beta family. Importin beta-2 subfamily. Interacts with Ran; interacts specifically with the GTP-bound form of Ran (GTP-Ran), protecting it from GTP hydrolysis and nucleotide exchange. Interacts with nucleoporins.

It is found in the cytoplasm. The protein localises to the nucleus envelope. Functions in nuclear protein import as nuclear transport receptor. Serves as receptor for arginine/glycine-rich nuclear localization signals (rg-NLS) and PY-NLS in cargo substrates. Its predominant cargo substrate seems to be mRNA-binding proteins. Mediates docking of the importin/substrate complex to the nuclear pore complex (NPC) through binding to repeat-containing nucleoporins. The complex is subsequently translocated through the pore by an energy requiring, Ran-dependent mechanism. At the nucleoplasmic side of the NPC, GTP-Ran binding leads to release of the cargo. The importin is re-exported from the nucleus to the cytoplasm where GTP hydrolysis releases Ran from importin. The directionality of nuclear import is thought to be conferred by an asymmetric distribution of the GTP- and GDP-bound forms of Ran between the cytoplasm and nucleus. This is Importin subunit beta-2 from Schizosaccharomyces pombe (strain 972 / ATCC 24843) (Fission yeast).